A 421-amino-acid chain; its full sequence is Imidazolonepropionase (421 aa).

Residues H81 and H83 each contribute to the Fe(3+) site. Zn(2+)-binding residues include H81 and H83. The 4-imidazolone-5-propanoate site is built by R90, Y153, and H186. Position 153 (Y153) interacts with N-formimidoyl-L-glutamate. Fe(3+) is bound at residue H251. Position 251 (H251) interacts with Zn(2+). Position 254 (E254) interacts with 4-imidazolone-5-propanoate. Fe(3+) is bound at residue D326. D326 contributes to the Zn(2+) binding site. 2 residues coordinate N-formimidoyl-L-glutamate: N328 and G330. A 4-imidazolone-5-propanoate-binding site is contributed by S331.

It belongs to the metallo-dependent hydrolases superfamily. HutI family. It depends on Zn(2+) as a cofactor. Fe(3+) serves as cofactor.

The protein localises to the cytoplasm. The catalysed reaction is 4-imidazolone-5-propanoate + H2O = N-formimidoyl-L-glutamate. The protein operates within amino-acid degradation; L-histidine degradation into L-glutamate; N-formimidoyl-L-glutamate from L-histidine: step 3/3. Its function is as follows. Catalyzes the hydrolytic cleavage of the carbon-nitrogen bond in imidazolone-5-propanoate to yield N-formimidoyl-L-glutamate. It is the third step in the universal histidine degradation pathway. The sequence is that of Imidazolonepropionase from Streptococcus pyogenes serotype M6 (strain ATCC BAA-946 / MGAS10394).